The sequence spans 306 residues: Homeobox protein CUP9 (306 aa).

The tract at residues Pro75–Lys123 is disordered. Low complexity predominate over residues Ser79–Ser96. Over residues Lys97–Gly110 the composition is skewed to polar residues. The segment at residues Asn162–Asp224 is a DNA-binding region (homeobox; TALE-type).

The protein belongs to the TALE/CUP9 homeobox family.

Its subcellular location is the nucleus. In terms of biological role, probable DNA-binding protein which plays a role in protecting yeast cells against copper toxicity. May regulate the expression of important copper homeostatic genes. This Saccharomyces cerevisiae (strain ATCC 204508 / S288c) (Baker's yeast) protein is Homeobox protein CUP9 (CUP9).